Consider the following 105-residue polypeptide: Large ribosomal subunit protein bL21 (105 aa).

The protein belongs to the bacterial ribosomal protein bL21 family. Part of the 50S ribosomal subunit. Contacts protein L20.

This protein binds to 23S rRNA in the presence of protein L20. This chain is Large ribosomal subunit protein bL21, found in Rickettsia africae (strain ESF-5).